A 684-amino-acid polypeptide reads, in one-letter code: Transcriptional regulatory protein RCO1 (684 aa).

At Met1 the chain carries N-acetylmethionine. Positions 1–48 (MDTSKKDTTRSPSHSNSSSPSSSSLSSSSSKEKKRPKRLSSQNVNYDL) are disordered. A compositionally biased stretch (low complexity) spans 10-29 (RSPSHSNSSSPSSSSLSSSS). Residue Ser68 is modified to Phosphoserine. The segment at 260 to 309 (EDFCSACNQSGSFLCCDTCPKSFHFLCLDPPIDPNNLPKGDWHCNECKFK) adopts a PHD-type 1 zinc-finger fold. The PHD-type 2; atypical zinc finger occupies 414–472 (FLICYKCNQTRLGSWSHPENSRLIMTCDYCQTPWHLDCVPRASFKNLGSKWKCPLHSPT). Ser683 bears the Phosphoserine mark.

Component of the RPD3C(S) complex composed of at least EAF3, RCO1, RPD3, SIN3, and UME1.

It is found in the nucleus. Catalytic component of the RPD3C(S) histone deacetylase complex responsible for the deacetylation of lysine residues on the N-terminal part of the core histones (H2A, H2B, H3 and H4). Histone deacetylation gives a tag for epigenetic repression and plays an important role in transcriptional regulation, cell cycle progression, DNA damage response, osmotic stress response and developmental events. This is Transcriptional regulatory protein RCO1 (RCO1) from Saccharomyces cerevisiae (strain ATCC 204508 / S288c) (Baker's yeast).